Consider the following 451-residue polypeptide: Phosphoglucosamine mutase (451 aa).

The Phosphoserine intermediate role is filled by Ser101. Ser101, Asp240, Asp242, and Asp244 together coordinate Mg(2+). The residue at position 101 (Ser101) is a Phosphoserine.

Belongs to the phosphohexose mutase family. It depends on Mg(2+) as a cofactor. Activated by phosphorylation.

It catalyses the reaction alpha-D-glucosamine 1-phosphate = D-glucosamine 6-phosphate. Functionally, catalyzes the conversion of glucosamine-6-phosphate to glucosamine-1-phosphate. The chain is Phosphoglucosamine mutase from Streptococcus pyogenes serotype M18 (strain MGAS8232).